We begin with the raw amino-acid sequence, 87 residues long: Defensin alpha-like protein 1 (87 aa).

The N-terminal stretch at 1 to 19 is a signal peptide; sequence MKTLILLSALVLLALQVQA. The propeptide occupies 20-56; the sequence is DPIQEAEEETKTEEQPADEDQDVSVSFEGPEASAVQD. The segment covering 23 to 41 has biased composition (acidic residues); sequence QEAEEETKTEEQPADEDQD. The interval 23-43 is disordered; it reads QEAEEETKTEEQPADEDQDVS.

Belongs to the alpha-defensin family. As to quaternary structure, antiparallel homodimer; disulfide-linked. In terms of tissue distribution, specifically expressed in small intestine (jejunum and ileum). Probably expressed by Paneth cells at the base of intestinal crypts. Coexpressed with MMP7 in small intestine.

The protein resides in the secreted. Its function is as follows. Intestinal defense peptide. Has potent antibacterial activity against Gram-negative bacteria E.coli O157:H7, S.typhimurium DT104, and K.pneumoniae; and against Gram-positive bacteria S.aureus, methicillin-resistant S.aureus and L.monocytogenes. Remains active in the presence of NaCl and Mg(2+). Probably functions by disrupting bacterial membrane integrity. However, does not show cytotoxic activity towards human intestinal cells. The protein is Defensin alpha-like protein 1 of Rattus norvegicus (Rat).